A 442-amino-acid polypeptide reads, in one-letter code: Putative protein YjbI (442 aa).

The chain is Putative protein YjbI (yjbI) from Escherichia coli (strain K12).